A 284-amino-acid chain; its full sequence is NH(3)-dependent NAD(+) synthetase (284 aa).

Gly-51–Ser-58 is a binding site for ATP. Asp-57 is a Mg(2+) binding site. Residue Arg-148 participates in deamido-NAD(+) binding. Thr-168 lines the ATP pocket. Glu-173 contributes to the Mg(2+) binding site. Deamido-NAD(+) contacts are provided by Lys-181 and Asp-188. Residues Lys-197 and Thr-219 each contribute to the ATP site. A deamido-NAD(+)-binding site is contributed by His-268–Lys-269.

The protein belongs to the NAD synthetase family. As to quaternary structure, homodimer.

It catalyses the reaction deamido-NAD(+) + NH4(+) + ATP = AMP + diphosphate + NAD(+) + H(+). It participates in cofactor biosynthesis; NAD(+) biosynthesis; NAD(+) from deamido-NAD(+) (ammonia route): step 1/1. Catalyzes the ATP-dependent amidation of deamido-NAD to form NAD. Uses ammonia as a nitrogen source. The protein is NH(3)-dependent NAD(+) synthetase of Burkholderia pseudomallei (strain 1106a).